A 321-amino-acid polypeptide reads, in one-letter code: Ribosomal RNA small subunit methyltransferase H (321 aa).

S-adenosyl-L-methionine-binding positions include Gly-40–His-42, Asp-60, Phe-84, Asp-106, and Gln-113.

The protein belongs to the methyltransferase superfamily. RsmH family.

It is found in the cytoplasm. The catalysed reaction is cytidine(1402) in 16S rRNA + S-adenosyl-L-methionine = N(4)-methylcytidine(1402) in 16S rRNA + S-adenosyl-L-homocysteine + H(+). Specifically methylates the N4 position of cytidine in position 1402 (C1402) of 16S rRNA. The chain is Ribosomal RNA small subunit methyltransferase H from Haemophilus influenzae (strain PittEE).